The primary structure comprises 705 residues: Polyribonucleotide nucleotidyltransferase (705 aa).

Residues aspartate 494 and aspartate 500 each contribute to the Mg(2+) site. A KH domain is found at 561–620 (PRITTVKVKPEKVRAVIGTGGKNIRQIVSETGVTIDVEDDGTVTIASSDMEASARAIAMV). In terms of domain architecture, S1 motif spans 630–698 (GKIYRGTVKK…KQGKIRLSRK (69 aa)).

It belongs to the polyribonucleotide nucleotidyltransferase family. Mg(2+) is required as a cofactor.

It localises to the cytoplasm. The catalysed reaction is RNA(n+1) + phosphate = RNA(n) + a ribonucleoside 5'-diphosphate. Functionally, involved in mRNA degradation. Catalyzes the phosphorolysis of single-stranded polyribonucleotides processively in the 3'- to 5'-direction. This is Polyribonucleotide nucleotidyltransferase from Syntrophus aciditrophicus (strain SB).